A 292-amino-acid chain; its full sequence is MATLHFTKGQGTGNDFVLYADPDGTLPLSAGQIAEICDRHFGVGADGVIRAVRSKRLPEGAEALADDEAAEWFMDYYNADGSAAEMCGNGIRVYVRYLIESRLVQLADGDTLPIGTRSGVRDVQRTLSGFQVDLGRWRLAGGEPLVRAKELPVARLGLGIDLGNPHVVVALADESELESADLTYIPHLEPAPQGGANVEFVVPHEPLVKDGVGRIRMRVHERGSGETLSCGTGAAAAALAVRHWAGENAPGQWWVDVPGGTVGVRMFPTEDGEHVALSGPAELVYTGALELA.

The substrate site is built by Asn-14 and Asn-78. The active-site Proton donor is the Cys-87. Substrate is bound by residues 88–89 (GN), Asn-164, Asn-197, and 221–222 (ER). The active-site Proton acceptor is the Cys-230. 231–232 (GT) contributes to the substrate binding site.

It belongs to the diaminopimelate epimerase family. Homodimer.

Its subcellular location is the cytoplasm. It carries out the reaction (2S,6S)-2,6-diaminopimelate = meso-2,6-diaminopimelate. Its pathway is amino-acid biosynthesis; L-lysine biosynthesis via DAP pathway; DL-2,6-diaminopimelate from LL-2,6-diaminopimelate: step 1/1. Catalyzes the stereoinversion of LL-2,6-diaminopimelate (L,L-DAP) to meso-diaminopimelate (meso-DAP), a precursor of L-lysine and an essential component of the bacterial peptidoglycan. This Leifsonia xyli subsp. xyli (strain CTCB07) protein is Diaminopimelate epimerase.